The following is a 123-amino-acid chain: Large ribosomal subunit protein uL14 (123 aa).

Belongs to the universal ribosomal protein uL14 family. In terms of assembly, part of the 50S ribosomal subunit. Forms a cluster with proteins L3 and L19. In the 70S ribosome, L14 and L19 interact and together make contacts with the 16S rRNA in bridges B5 and B8.

Binds to 23S rRNA. Forms part of two intersubunit bridges in the 70S ribosome. The sequence is that of Large ribosomal subunit protein uL14 from Aliivibrio fischeri (strain ATCC 700601 / ES114) (Vibrio fischeri).